We begin with the raw amino-acid sequence, 623 residues long: Quinoprotein ethanol dehydrogenase (623 aa).

Residues 1–34 (MTTRTSPAPAGLLRPSLHCLAFAVALGSAGAALA) form the signal peptide. Residues Asp45, Thr48, and Asp51 each coordinate Ca(2+). A pyrroloquinoline quinone-binding site is contributed by Glu95. Cys139 and Cys140 are disulfide-bonded. Pyrroloquinoline quinone contacts are provided by residues Arg145, Thr189, and 207–209 (HGS). Glu213 contributes to the Ca(2+) binding site. Positions 244–281 (LNGKDSTVTGDVKAPSWPDDRNSPTGKVESWSHGGGAP) are disordered. Ca(2+) is bound by residues Asn300 and Asp350. Asp350 functions as the Proton acceptor in the catalytic mechanism. Position 378 (Arg378) interacts with pyrroloquinoline quinone. A disordered region spans residues 413 to 434 (GRPVEREGQRPPLPEPGQKHGK). Residues Trp523 and Ala587 each coordinate pyrroloquinoline quinone.

This sequence belongs to the bacterial PQQ dehydrogenase family. As to quaternary structure, homodimer. Interacts with cytochrome c550. It depends on pyrroloquinoline quinone as a cofactor. Ca(2+) is required as a cofactor. Post-translationally, the disulfide ring formed between the two adjacent cysteine residues Cys-139 and Cys-140 is essential for efficient electron transfer at pH 7 from QEDH to its natural electron acceptor cytochrome c550.

The protein resides in the periplasm. The catalysed reaction is a primary alcohol + 2 Fe(III)-[cytochrome c] = an aldehyde + 2 Fe(II)-[cytochrome c] + 2 H(+). It carries out the reaction ethanol + 2 Fe(III)-[cytochrome c] = acetaldehyde + 2 Fe(II)-[cytochrome c] + 2 H(+). The enzyme catalyses butan-1-ol + 2 Fe(III)-[cytochrome c] = butanal + 2 Fe(II)-[cytochrome c] + 2 H(+). It catalyses the reaction propan-2-ol + 2 Fe(III)-[cytochrome c] = acetone + 2 Fe(II)-[cytochrome c] + 2 H(+). The catalysed reaction is 1-propanol + 2 Fe(III)-[cytochrome c] = propanal + 2 Fe(II)-[cytochrome c] + 2 H(+). The protein operates within alcohol metabolism; ethanol degradation; acetate from ethanol: step 1/2. Its activity is regulated as follows. Inhibited by cyclopropanone ethylhemiketal. Activated by ammonia (500mM), methylamine (5mM), ethylamine (5mM), octylamine (5mM), ethanolamine (5mM) and 1-amino-2-propanol (5mM), in assays using artificial electron acceptors. Ammonia is not needed for, nor does it stimulate, the ethanol-oxidizing activity when using the natural electron acceptor cytochrome c550. Functionally, catalyzes the oxidation of ethanol and other primary alcohols to the corresponding aldehydes, except methanol, which is a very poor substrate. Uses a specific inducible cytochrome c550, encoded by the adjacent gene in the locus, as electron acceptor. Is a key enzyme of the carbon and energy metabolism during growth of P.aeruginosa on ethanol as the sole carbon and energy source. Is also able to use secondary alcohols as well as aminoalcohols like ethanolamine and 1-amino-2-propanol, and aldehydes as substrates. The protein is Quinoprotein ethanol dehydrogenase of Pseudomonas aeruginosa (strain ATCC 15692 / DSM 22644 / CIP 104116 / JCM 14847 / LMG 12228 / 1C / PRS 101 / PAO1).